Here is a 273-residue protein sequence, read N- to C-terminus: Shikimate dehydrogenase (NADP(+)) (273 aa).

Shikimate is bound by residues 15–17 (SKS) and threonine 62. The active-site Proton acceptor is the lysine 66. Aspartate 78 contacts NADP(+). The shikimate site is built by asparagine 87 and aspartate 103. Residues 127–131 (GAGGA), 150–155 (NRTYAR), and methionine 214 contribute to the NADP(+) site. Position 216 (tyrosine 216) interacts with shikimate. Glycine 238 contributes to the NADP(+) binding site.

This sequence belongs to the shikimate dehydrogenase family. As to quaternary structure, homodimer.

The enzyme catalyses shikimate + NADP(+) = 3-dehydroshikimate + NADPH + H(+). Its pathway is metabolic intermediate biosynthesis; chorismate biosynthesis; chorismate from D-erythrose 4-phosphate and phosphoenolpyruvate: step 4/7. Functionally, involved in the biosynthesis of the chorismate, which leads to the biosynthesis of aromatic amino acids. Catalyzes the reversible NADPH linked reduction of 3-dehydroshikimate (DHSA) to yield shikimate (SA). The polypeptide is Shikimate dehydrogenase (NADP(+)) (Yersinia enterocolitica serotype O:8 / biotype 1B (strain NCTC 13174 / 8081)).